The primary structure comprises 1158 residues: ATP-dependent helicase/deoxyribonuclease subunit B (1158 aa).

8–15 (GRAGTGKS) lines the ATP pocket. Residues C791, C1112, C1115, and C1121 each contribute to the [4Fe-4S] cluster site.

The protein belongs to the helicase family. AddB/RexB type 1 subfamily. As to quaternary structure, heterodimer of AddA and AddB. Mg(2+) serves as cofactor. [4Fe-4S] cluster is required as a cofactor.

In terms of biological role, the heterodimer acts as both an ATP-dependent DNA helicase and an ATP-dependent, dual-direction single-stranded exonuclease. Recognizes the chi site generating a DNA molecule suitable for the initiation of homologous recombination. The AddB subunit has 5' -&gt; 3' nuclease activity but not helicase activity. This Clostridium perfringens (strain ATCC 13124 / DSM 756 / JCM 1290 / NCIMB 6125 / NCTC 8237 / Type A) protein is ATP-dependent helicase/deoxyribonuclease subunit B.